The sequence spans 76 residues: Protein sprouty homolog 1 (76 aa).

One can recognise an SPR domain in the interval Asn1–Cys52.

Belongs to the sprouty family. In terms of tissue distribution, brain and interlimb region.

The protein resides in the cytoplasm. Its subcellular location is the membrane. In terms of biological role, inhibits fibroblast growth factor (FGF)-induced retinal lens fiber differentiation. Inhibits TGFB-induced epithelial-to-mesenchymal transition in lens epithelial cells. The chain is Protein sprouty homolog 1 (SPRY1) from Gallus gallus (Chicken).